The chain runs to 492 residues: MAKSKKKTDVVDSTNLPILELLSLKAPIFQSLLHPELPIIITGFGTGHIVCHRYDPAKLQSHLDRRRRIDTATTGKDAKKGVCPWIRLDIDLETGDLKFVDIEEQQQQKQTGKDEDLGVKTLWKTKRHKGSVRAMCFDSKGDNIFSVGSDNVLKKANTMTGKVVKKVNLSSLFNSEEKKNDKFTKLCASQTHPFILIGDESGNIHVINSENLALSNSIRSIHFGDSINDIFHFDKRSAYKFISLGQTTLAYFDVRDKDAKPNVAGNEDGKILISDDQEDEVLCGCFVDPEVADTLLCGMGEGIVTVWKPNKNDLEDQMSRIKISKDESIDCIVPTLQDDNCVWCGCSNGNIYKVNAKLGKVVEIRNHSELDEVSFVDLDFEYRVVSGGLENIKIWELSSDDVEENASVESDSDEPLSHSDEDLSDDTSSDDETTLVGLSKEELLDELDKDLKEDHQEEKESNSKSVKKRKIMKENNKKKDLYEHGIKKFDDL.

5 WD repeats span residues 127–166 (RHKGSVRAMCFDSKGDNIFSVGSDNVLKKANTMTGKVVKK), 178–217 (KKNDKFTKLCASQTHPFILIGDESGNIHVINSENLALSNS), 236–274 (RSAYKFISLGQTTLAYFDVRDKDAKPNVAGNEDGKILIS), 276–317 (DQED…LEDQ), and 365–405 (RNHS…VEEN). Composition is skewed to acidic residues over residues 404-414 (ENASVESDSDE) and 422-433 (DLSDDTSSDDET). The tract at residues 404 to 472 (ENASVESDSD…SKSVKKRKIM (69 aa)) is disordered. The span at 449-462 (KDLKEDHQEEKESN) shows a compositional bias: basic and acidic residues.

Interacts with BUD27 and GIS1.

It is found in the nucleus. The protein resides in the nucleolus. This is WD repeat-containing protein JIP5 (JIP5) from Saccharomyces cerevisiae (strain ATCC 204508 / S288c) (Baker's yeast).